The following is an 89-amino-acid chain: Small ribosomal subunit protein bS20 (89 aa).

Belongs to the bacterial ribosomal protein bS20 family.

Its function is as follows. Binds directly to 16S ribosomal RNA. This is Small ribosomal subunit protein bS20 from Phenylobacterium zucineum (strain HLK1).